The following is a 277-amino-acid chain: Tetrahydroxynaphthalene reductase PfmaG (277 aa).

The NADP(+) site is built by isoleucine 36, aspartate 82, and asparagine 109. Active-site proton donor residues include serine 158, serine 159, and tyrosine 173. NADP(+)-binding residues include tyrosine 173, lysine 177, isoleucine 206, and threonine 208. Lysine 177 serves as the catalytic Lowers pKa of active site Tyr.

It belongs to the short-chain dehydrogenases/reductases (SDR) family.

The enzyme catalyses scytalone + NADP(+) = naphthalene-1,3,6,8-tetrol + NADPH + H(+). It functions in the pathway pigment biosynthesis; melanin biosynthesis. Its function is as follows. Tetrahydroxynaphthalene reductase; part of the gene cluster that mediates the biosynthesis of dihydroxynaphthalene (DHN)-melanin, a bluish-green pigment forming a dark layer in the conidial wall that protects the conidia from UV radiations. The first step of the pathway is the production of the pentaketide 1,3,6,8-tetrahydroxynaphthalene (1,3,6,8-THN or T4HN) by the polyketide synthase PfmaE though condensation of acetyl-CoA with malonyl-CoA. T4HN is not stable and easily oxidizes into the stable form flaviolin. T4HN is also substrate of the hydroxynaphthalene reductase PfmaG to yield scytalone. The scytalone dehydratase PfmaJ then reduces scytalone to 1,3,8-THN. 1,3,8-THN is then substrate of the hydroxynaphthalene reductase PfmaI to yield vermelone. Vermelone is further converted by the multicopper oxidase PfmaD to 1,8-DHN. Finally the laccase PFICI_06862 transforms 1,8-DHN to DHN-melanin. The roles of the 5-oxoprolinase PfmaA and the proline iminopeptidase PfmaB within the cluster have not been elucidated yet. The polypeptide is Tetrahydroxynaphthalene reductase PfmaG (Pestalotiopsis fici (strain W106-1 / CGMCC3.15140)).